The primary structure comprises 146 residues: Large ribosomal subunit protein uL24 (146 aa).

Positions 1 to 33 (MKYNPRVTSSRRRNRKPHFTASSSERRVXMSSP) are disordered. The span at 9-18 (SSRRRNRKPH) shows a compositional bias: basic residues.

It belongs to the universal ribosomal protein uL24 family.

This Brassica campestris (Field mustard) protein is Large ribosomal subunit protein uL24 (RPL26).